Here is a 1465-residue protein sequence, read N- to C-terminus: DNA polymerase III polC-type (1465 aa).

Positions 427–583 constitute an Exonuclease domain; it reads YVVFDVETTG…YDAEATGRLL (157 aa).

Belongs to the DNA polymerase type-C family. PolC subfamily.

The protein localises to the cytoplasm. It carries out the reaction DNA(n) + a 2'-deoxyribonucleoside 5'-triphosphate = DNA(n+1) + diphosphate. Functionally, required for replicative DNA synthesis. This DNA polymerase also exhibits 3' to 5' exonuclease activity. The protein is DNA polymerase III polC-type of Streptococcus pyogenes serotype M3 (strain ATCC BAA-595 / MGAS315).